The primary structure comprises 442 residues: tRNA modification GTPase MnmE (442 aa).

3 residues coordinate (6S)-5-formyl-5,6,7,8-tetrahydrofolate: Arg23, Glu82, and Lys121. Residues 217–363 (PFKIAIIGET…LVDLLTKYIN (147 aa)) enclose the TrmE-type G domain. Position 227 (Asn227) interacts with K(+). GTP contacts are provided by residues 227–232 (NVGKSS), 246–252 (SNIKGST), and 271–274 (DTAG). Mg(2+) is bound at residue Ser231. The K(+) site is built by Ser246, Ile248, and Ser251. A Mg(2+)-binding site is contributed by Thr252. (6S)-5-formyl-5,6,7,8-tetrahydrofolate is bound at residue Lys442.

This sequence belongs to the TRAFAC class TrmE-Era-EngA-EngB-Septin-like GTPase superfamily. TrmE GTPase family. Homodimer. Heterotetramer of two MnmE and two MnmG subunits. The cofactor is K(+).

It localises to the cytoplasm. Exhibits a very high intrinsic GTPase hydrolysis rate. Involved in the addition of a carboxymethylaminomethyl (cmnm) group at the wobble position (U34) of certain tRNAs, forming tRNA-cmnm(5)s(2)U34. The chain is tRNA modification GTPase MnmE from Mycoplasma genitalium (strain ATCC 33530 / DSM 19775 / NCTC 10195 / G37) (Mycoplasmoides genitalium).